Consider the following 563-residue polypeptide: Heat shock 70 kDa protein 8 (563 aa).

The interval 1–25 (MAEAAYTVASDSENTGEEKSSSSPS) is disordered. Alanine 2 is subject to N-acetylalanine.

This sequence belongs to the heat shock protein 70 (TC 1.A.33) family. DnaK subfamily.

In terms of biological role, in cooperation with other chaperones, Hsp70s are key components that facilitate folding of de novo synthesized proteins, assist translocation of precursor proteins into organelles, and are responsible for degradation of damaged protein under stress conditions. This is Heat shock 70 kDa protein 8 (HSP70-8) from Arabidopsis thaliana (Mouse-ear cress).